Consider the following 292-residue polypeptide: uncharacterized protein (292 aa).

A helical membrane pass occupies residues Leu13 to Tyr35.

This sequence belongs to the serine esterase family.

The protein localises to the membrane. This is an uncharacterized protein from Salmonella typhimurium (strain LT2 / SGSC1412 / ATCC 700720).